Reading from the N-terminus, the 370-residue chain is tRNA-specific 2-thiouridylase MnmA (370 aa).

ATP is bound by residues 7-14 (ALSGGVDS) and M34. The segment at 104–106 (NPD) is interaction with target base in tRNA. C109 functions as the Nucleophile in the catalytic mechanism. Residues C109 and C202 are joined by a disulfide bond. G134 provides a ligand contact to ATP. The tract at residues 152-154 (KDQ) is interaction with tRNA. The active-site Cysteine persulfide intermediate is C202. An interaction with tRNA region spans residues 308–309 (RY).

Belongs to the MnmA/TRMU family.

It localises to the cytoplasm. The catalysed reaction is S-sulfanyl-L-cysteinyl-[protein] + uridine(34) in tRNA + AH2 + ATP = 2-thiouridine(34) in tRNA + L-cysteinyl-[protein] + A + AMP + diphosphate + H(+). Its function is as follows. Catalyzes the 2-thiolation of uridine at the wobble position (U34) of tRNA, leading to the formation of s(2)U34. This Mycoplasma mobile (strain ATCC 43663 / 163K / NCTC 11711) (Mesomycoplasma mobile) protein is tRNA-specific 2-thiouridylase MnmA.